The sequence spans 395 residues: Na(+)/H(+) antiporter NhaA (395 aa).

Helical transmembrane passes span 11–31 (FQLEAASGLLLIAAAILALII), 61–81 (LLLWINDGLMALFFLLIGLEV), 96–116 (IVLPGAAAIGGMLVPALIYWF), 127–147 (GWAIPTATDIAFALGVLALLG), 156–176 (LFLMTLAIIDDLGAIVIIAIF), 179–199 (GELSTLSLGLAAACIAALVAM), 215–237 (LILWVCVLKSGVHATLAGVTLAF), 262–282 (VAYGILPLFAFANAGLSLSGV), 295–315 (IAVGLLLGKTLGVFGLTWLAV), 334–354 (VAILCGIGFTMSLFVGSLAFV), and 366–386 (MGILTGSVFAALIGYAVTAAA).

Belongs to the NhaA Na(+)/H(+) (TC 2.A.33) antiporter family.

It localises to the cell inner membrane. The catalysed reaction is Na(+)(in) + 2 H(+)(out) = Na(+)(out) + 2 H(+)(in). In terms of biological role, na(+)/H(+) antiporter that extrudes sodium in exchange for external protons. The protein is Na(+)/H(+) antiporter NhaA of Pseudomonas fluorescens (strain Pf0-1).